We begin with the raw amino-acid sequence, 284 residues long: Pantothenate synthetase (284 aa).

Residue 30 to 37 (MGNLHDGH) coordinates ATP. The active-site Proton donor is His-37. Position 61 (Gln-61) interacts with (R)-pantoate. A beta-alanine-binding site is contributed by Gln-61. Residue 149–152 (GEKD) coordinates ATP. Gln-155 lines the (R)-pantoate pocket. Residues Val-178 and 186–189 (LSSR) each bind ATP.

This sequence belongs to the pantothenate synthetase family. In terms of assembly, homodimer.

Its subcellular location is the cytoplasm. The enzyme catalyses (R)-pantoate + beta-alanine + ATP = (R)-pantothenate + AMP + diphosphate + H(+). The protein operates within cofactor biosynthesis; (R)-pantothenate biosynthesis; (R)-pantothenate from (R)-pantoate and beta-alanine: step 1/1. Its function is as follows. Catalyzes the condensation of pantoate with beta-alanine in an ATP-dependent reaction via a pantoyl-adenylate intermediate. This chain is Pantothenate synthetase, found in Cronobacter sakazakii (strain ATCC BAA-894) (Enterobacter sakazakii).